Reading from the N-terminus, the 357-residue chain is SPbeta prophage-derived pesticidal crystal protein-like YokG (357 aa).

This sequence belongs to the cry6A endotoxin family.

The polypeptide is SPbeta prophage-derived pesticidal crystal protein-like YokG (yokG) (Bacillus subtilis (strain 168)).